Here is a 540-residue protein sequence, read N- to C-terminus: Amino acid transporter AVT1B (540 aa).

Residues M1–Y11 show a composition bias toward polar residues. The segment at M1–S55 is disordered. 11 helical membrane passes run A155 to V175, W180 to L200, I227 to L247, L273 to V293, I297 to L317, L332 to F352, A367 to G387, I412 to V432, I452 to L474, L478 to L500, and I511 to L531.

The protein belongs to the amino acid/polyamine transporter 2 family. Amino acid/auxin permease (AAAP) (TC 2.A.18.5) subfamily.

The protein localises to the membrane. In Arabidopsis thaliana (Mouse-ear cress), this protein is Amino acid transporter AVT1B.